A 400-amino-acid chain; its full sequence is Enoyl-[acyl-carrier-protein] reductase [NADH] (400 aa).

Residues 48–53 (GASTGY), 74–75 (FE), 111–112 (DA), and 139–140 (LA) contribute to the NAD(+) site. Residue Y225 coordinates substrate. The Proton donor role is filled by Y235. Residues K244 and 273–275 (VVT) contribute to the NAD(+) site.

This sequence belongs to the TER reductase family. In terms of assembly, monomer.

The catalysed reaction is a 2,3-saturated acyl-[ACP] + NAD(+) = a (2E)-enoyl-[ACP] + NADH + H(+). It functions in the pathway lipid metabolism; fatty acid biosynthesis. Functionally, involved in the final reduction of the elongation cycle of fatty acid synthesis (FAS II). Catalyzes the reduction of a carbon-carbon double bond in an enoyl moiety that is covalently linked to an acyl carrier protein (ACP). This chain is Enoyl-[acyl-carrier-protein] reductase [NADH], found in Burkholderia ambifaria (strain ATCC BAA-244 / DSM 16087 / CCUG 44356 / LMG 19182 / AMMD) (Burkholderia cepacia (strain AMMD)).